A 173-amino-acid polypeptide reads, in one-letter code: Large ribosomal subunit protein bL17 (173 aa).

The interval 136–173 (AEEEAPAVEAEATEATEAPVEEAAAVEAEAPADAEKAE) is disordered. A compositionally biased stretch (acidic residues) spans 138-149 (EEAPAVEAEATE). Low complexity predominate over residues 150–166 (ATEAPVEEAAAVEAEAP).

Belongs to the bacterial ribosomal protein bL17 family. Part of the 50S ribosomal subunit. Contacts protein L32.

In Bifidobacterium longum subsp. infantis (strain ATCC 15697 / DSM 20088 / JCM 1222 / NCTC 11817 / S12), this protein is Large ribosomal subunit protein bL17.